A 1433-amino-acid polypeptide reads, in one-letter code: Probable ATP-dependent RNA helicase spindle-E (1433 aa).

The 169-residue stretch at 126–294 (INAINENPVV…FANERSAPPV (169 aa)) folds into the Helicase ATP-binding domain. 139–146 (GETGCGKT) is a binding site for ATP. The short motif at 240–243 (DEVH) is the DEAH box element. In terms of domain architecture, Helicase C-terminal spans 355–526 (TGKSYNQSLR…NCVLKAKELK (172 aa)). Residues 935-998 (AGAITKGLML…RLMSQDLLRH (64 aa)) enclose the Tudor domain.

This sequence belongs to the DEAD box helicase family. DEAH subfamily.

The protein localises to the cytoplasm. The catalysed reaction is ATP + H2O = ADP + phosphate + H(+). In terms of biological role, probable ATP-binding RNA helicase which plays a central role during spermatogenesis and oogenesis by repressing transposable elements and preventing their mobilization, which is essential for the germline integrity. Acts via the piRNA metabolic process, which mediates the repression of transposable elements during meiosis by forming complexes composed of piRNAs and Piwi and govern the methylation and subsequent repression of transposons. Involved in the repression of LTR retrotransposon copia. Also involved in telomere regulation by repressing specialized telomeric retroelements HeT-A, TAHRE, and TART; Drosophila telomeres being maintained by transposition of specialized telomeric retroelements. Involved in telomeric trans-silencing, a repression mechanism by which a transposon or a transgene inserted in subtelomeric heterochromatin has the capacity to repress in trans in the female germline, a homologous transposon, or transgene located in euchromatin. Involved in the repression of testis-expressed Stellate genes by the homologous Su(Ste) repeats. Required for anteroposterior and dorsoventral axis formation during oogenesis. The protein is Probable ATP-dependent RNA helicase spindle-E (spn-E) of Drosophila pseudoobscura pseudoobscura (Fruit fly).